A 430-amino-acid polypeptide reads, in one-letter code: Pre-B-cell leukemia transcription factor 2 (430 aa).

The segment at 1–52 (MDERLLGPPPPGGGRGGLGLVSGEPGGPGEPPGGGDPGGGSGGVPGGRGKQD) is disordered. Gly residues predominate over residues 13–48 (GGRGGLGLVSGEPGGPGEPPGGGDPGGGSGGVPGGR). Residues 48-243 (RGKQDIGDIL…VMILRSRFLD (196 aa)) enclose the PBC domain. The PBC-A stretch occupies residues 55-134 (DILQQIMTIT…EGVAGPEKGG (80 aa)). Residues serine 136, serine 151, and serine 159 each carry the phosphoserine modification. The interval 137 to 243 (AAAAAAAAAS…VMILRSRFLD (107 aa)) is PBC-B. Positions 244-306 (ARRKRRNFSK…NKRIRYKKNI (63 aa)) form a DNA-binding region, homeobox; TALE-type. Disordered regions lie at residues 326-347 (QGGHSRTSSPTPPSSAGSGGSF) and 378-430 (SMGP…DTSN). Serine 330 is subject to Phosphoserine. A compositionally biased stretch (gly residues) spans 380 to 392 (GPGGYGDNLGGGQ). The residue at position 395 (serine 395) is a Phosphoserine. Residues 403 to 418 (GSWQEAVTPSSVTSPT) show a composition bias toward polar residues.

This sequence belongs to the TALE/PBX homeobox family. As to quaternary structure, forms heterodimers with MEIS1 and heterotrimers with MEIS1 and HOXA9. Interacts with PBXIP1. In terms of tissue distribution, ubiquitously expressed.

The protein localises to the nucleus. Transcriptional activator that binds the sequence 5'-ATCAATCAA-3'. Activates transcription of PF4 in complex with MEIS1. The polypeptide is Pre-B-cell leukemia transcription factor 2 (PBX2) (Homo sapiens (Human)).